Consider the following 517-residue polypeptide: Alpha-amylase (517 aa).

The signal sequence occupies residues 1-21; the sequence is MAHLLLAVVAITLALSQSVFG. A disulfide bridge links C52 with C108. N122, R178, and D187 together coordinate Ca(2+). R215 lines the chloride pocket. D217 acts as the Nucleophile in catalysis. H221 lines the Ca(2+) pocket. The active-site Proton donor is E253. R355 provides a ligand contact to chloride. 2 cysteine pairs are disulfide-bonded: C397–C403 and C470–C482.

It belongs to the glycosyl hydrolase 13 family. Monomer. Requires Ca(2+) as cofactor. The cofactor is chloride.

The protein localises to the secreted. It carries out the reaction Endohydrolysis of (1-&gt;4)-alpha-D-glucosidic linkages in polysaccharides containing three or more (1-&gt;4)-alpha-linked D-glucose units.. Its activity is regulated as follows. Activated by chloride ions. Inhibited by acarbose. Not inhibited by wheat alpha-amylase inhibitors 1 (WI-1, the tetrameric form) or 3 (WI-3, the monomeric form) and bean alpha-amylase inhibitor 1 (alphaAI-1). In Acarus siro (Flour mite), this protein is Alpha-amylase.